The chain runs to 58 residues: Potassium channel toxin Ts16 (58 aa).

The N-terminal stretch at 1–16 (MHSSVFILILFSLAVI) is a signal peptide. 3 cysteine pairs are disulfide-bonded: Cys-29–Cys-51, Cys-34–Cys-47, and Cys-38–Cys-53.

As to expression, expressed by the venom gland.

It is found in the secreted. Its function is as follows. Blocks potassium channels. This is Potassium channel toxin Ts16 from Tityus serrulatus (Brazilian scorpion).